The sequence spans 681 residues: DNA-directed RNA polymerase subunit beta' (681 aa).

Zn(2+) contacts are provided by Cys-69, Cys-71, Cys-87, and Cys-90. Asp-489, Asp-491, and Asp-493 together coordinate Mg(2+).

The protein belongs to the RNA polymerase beta' chain family. RpoC1 subfamily. In terms of assembly, in plastids the minimal PEP RNA polymerase catalytic core is composed of four subunits: alpha, beta, beta', and beta''. When a (nuclear-encoded) sigma factor is associated with the core the holoenzyme is formed, which can initiate transcription. It depends on Mg(2+) as a cofactor. The cofactor is Zn(2+).

It is found in the plastid. Its subcellular location is the chloroplast. It carries out the reaction RNA(n) + a ribonucleoside 5'-triphosphate = RNA(n+1) + diphosphate. Functionally, DNA-dependent RNA polymerase catalyzes the transcription of DNA into RNA using the four ribonucleoside triphosphates as substrates. The chain is DNA-directed RNA polymerase subunit beta' from Anthoceros angustus (Hornwort).